Consider the following 246-residue polypeptide: Probable transcriptional regulatory protein ASA_2843 (246 aa).

It belongs to the TACO1 family.

The protein resides in the cytoplasm. The chain is Probable transcriptional regulatory protein ASA_2843 from Aeromonas salmonicida (strain A449).